The chain runs to 130 residues: Small ribosomal subunit protein uS11c (130 aa).

It belongs to the universal ribosomal protein uS11 family. As to quaternary structure, part of the 30S ribosomal subunit.

Its subcellular location is the plastid. The protein localises to the chloroplast. This is Small ribosomal subunit protein uS11c from Pyropia yezoensis (Susabi-nori).